The following is a 370-amino-acid chain: Protein DUF642 L-GALACTONO-1,4-LACTONE-RESPONSIVE GENE 1 (370 aa).

Positions 1–22 are cleaved as a signal peptide; the sequence is MMYQEAALLLALLFISSNVVLS. A glycan (N-linked (GlcNAc...) asparagine) is linked at N124.

In terms of tissue distribution, expressed at low levels in roots, seedlings and leaves.

The protein resides in the secreted. It is found in the cell wall. The chain is Protein DUF642 L-GALACTONO-1,4-LACTONE-RESPONSIVE GENE 1 from Arabidopsis thaliana (Mouse-ear cress).